A 325-amino-acid chain; its full sequence is G/U mismatch-specific uracil DNA glycosylase (325 aa).

The span at 1 to 11 shows a compositional bias: basic and acidic residues; that stretch reads MNDIETRDTGT. The tract at residues 1–50 is disordered; sequence MNDIETRDTGTKNDNSSEFNLSVKSHKRKRSFDDENLELEESREETSGGI. Over residues 12–23 the composition is skewed to polar residues; that stretch reads KNDNSSEFNLSV. The span at 34-43 shows a compositional bias: acidic residues; it reads DENLELEESR.

Belongs to the uracil-DNA glycosylase (UDG) superfamily. TDG/mug family.

The protein resides in the nucleus. The catalysed reaction is Specifically hydrolyzes mismatched double-stranded DNA and polynucleotides, releasing free uracil.. Functionally, removes uracil from G/U mispairs in ssDNA. Also corrects G/G mispairs. Does not catalyze the removal of thymine from G/T mispairs. The chain is G/U mismatch-specific uracil DNA glycosylase (thp1) from Schizosaccharomyces pombe (strain 972 / ATCC 24843) (Fission yeast).